The chain runs to 897 residues: Ubiquitin carboxyl-terminal hydrolase 33 (897 aa).

The UBP-type zinc finger occupies 7–110; it reads NDCPHLECVG…KQLPNAAKAV (104 aa). The Zn(2+) site is built by Cys9, His11, Cys31, Cys34, Cys44, Cys49, Cys54, His61, His65, His71, Cys84, and Cys87. The 515-residue stretch at 156 to 670 folds into the USP domain; that stretch reads TGLKNIGNTC…EAYVLFYKKS (515 aa). The Nucleophile role is filled by Cys165. 2 disordered regions span residues 261–308 and 343–420; these read LIPE…GPRV and GSHG…HKKV. Over residues 287 to 297 the composition is skewed to polar residues; that stretch reads DDFQSCESCGS. Basic and acidic residues-rich tracts occupy residues 299–308 and 344–353; these read DRADNEGPRV and SHGDLDKDVD. A compositionally biased stretch (polar residues) spans 355–396; the sequence is TSDSRPIISSQGAIKAQGRTSDSEIQVSSTVRPQSPTGNEGI. A compositionally biased stretch (low complexity) spans 398 to 411; that stretch reads SRLSSSPPKSSAWP. His628 (proton acceptor) is an active-site residue. DUSP domains lie at 672–765 and 773–876; these read DETQ…LYVC and EKLE…RPSV. Residues 875–884 show a composition bias toward low complexity; it reads SVSHQESETS. A disordered region spans residues 875–897; sequence SVSHQESETSQSEEKIEVETRTV. A compositionally biased stretch (basic and acidic residues) spans 886-897; the sequence is SEEKIEVETRTV.

The protein belongs to the peptidase C19 family. USP20/USP33 subfamily.

The protein localises to the cytoplasm. It localises to the perinuclear region. It is found in the cytoskeleton. Its subcellular location is the microtubule organizing center. The protein resides in the centrosome. It carries out the reaction Thiol-dependent hydrolysis of ester, thioester, amide, peptide and isopeptide bonds formed by the C-terminal Gly of ubiquitin (a 76-residue protein attached to proteins as an intracellular targeting signal).. In terms of biological role, deubiquitinating enzyme involved in various processes such as centrosome duplication, cellular migration and beta-2 adrenergic receptor/ADRB2 recycling. Involved in regulation of centrosome duplication by mediating deubiquitination of ccp110 in S and G2/M phase, leading to stabilize ccp110 during the period which centrioles duplicate and elongate. Involved in cell migration via its interaction with intracellular domain of robo1, leading to regulate the Slit signaling. Plays a role in commissural axon guidance cross the ventral midline of the neural tube in a Slit-dependent manner, possibly by mediating the deubiquitination of robo1. Acts as a regulator of G-protein coupled receptor (GPCR) signaling by mediating the deubiquitination of beta-arrestins (arrb1 and arrb2) and beta-2 adrenergic receptor (adrb2). Deubiquitinates dio2, thereby regulating thyroid hormone regulation. Mediates deubiquitination of both 'Lys-48'- and 'Lys-63'-linked polyubiquitin chains. This is Ubiquitin carboxyl-terminal hydrolase 33 (usp33) from Danio rerio (Zebrafish).